A 382-amino-acid chain; its full sequence is MDNLFTFLHEIEDRYARTIFNFHLISCDEIGDIYGLMKERISSEDMFDNIVYNKDIHPAIKKLVYCDIQLTKHIINQNTYPVFNDSSQVKCCHYFDINSDNSNISSRTVEIFEREKSSLVSYIKTTNKKRKVNYGEIKKTVHGGTNANYFSGKKSDEYLSTTVRSNINQPWIKTISKRMRVDIINHSIVTRGKSSILQTIEIIFTNRTCVKIFKDSTMHIILSKDKDEKGCIHMIDKLFYVYYNLFLLFEDIIQNEYFKEVANVVNHVLTATALDEKLFLIKKMAEHDVYGVSNFKIGMFNLTFIKSLDHTVFPSLLDEDSKIKFFKGKKLNIVALRSLEDCINYVTKSENMIEMMKERSTILNSIDIETESVDRLKELLLK.

The protein belongs to the orthopoxvirus OPG150 family. In terms of assembly, heterodimerizes with protein A8 to form the virus intermediate transcription factor (VITF)-3.

Its function is as follows. Acts with RNA polymerase to initiate transcription from intermediate gene promoters. This is Intermediate transcription factor 3 large subunit (OPG150) from Bos taurus (Bovine).